We begin with the raw amino-acid sequence, 497 residues long: tRNA (adenine(58)-N(1))-methyltransferase non-catalytic subunit TRM6 (497 aa).

The tract at residues 69–102 (TNGGSLQPKKKKEEPTSETKEAGTDNRNIIDDGK) is disordered. Over residues 79 to 102 (KKEEPTSETKEAGTDNRNIIDDGK) the composition is skewed to basic and acidic residues. Positions 94–104 (NRNIIDDGKSQ) are substrate. Position 107 is a phosphothreonine (T107). Substrate regions lie at residues 145 to 154 (KYIKKKKKKY) and 175 to 182 (REPGKINH). A disordered region spans residues 276 to 354 (SSEPKDIASV…EKQRRQEEQK (79 aa)). S298 and S305 each carry phosphoserine. Residues 311–354 (ESNHPEEQERMEIVSQDPDYKEPKESGSKKDYIQEKQRRQEEQK) are compositionally biased toward basic and acidic residues. Residues R349 and R377 each contribute to the substrate site. Substrate stretches follow at residues 415 to 423 (RERGGVINL) and 434 to 441 (QVLPDRSH). A disordered region spans residues 468-497 (PSLKSSTSTLESHKTEEPAAKKRKCPESDS). Residues 478–497 (ESHKTEEPAAKKRKCPESDS) are compositionally biased toward basic and acidic residues.

The protein belongs to the TRM6/GCD10 family. In terms of assembly, heterotetramer; composed of two copies of TRMT6 and two copies of TRMT61A.

It localises to the nucleus. In terms of biological role, substrate-binding subunit of tRNA (adenine-N(1)-)-methyltransferase, which catalyzes the formation of N(1)-methyladenine at position 58 (m1A58) in initiator methionyl-tRNA. Together with the TRMT61A catalytic subunit, part of a mRNA N(1)-methyltransferase complex that mediates methylation of adenosine residues at the N(1) position of a small subset of mRNAs: N(1) methylation takes place in tRNA T-loop-like structures of mRNAs and is only present at low stoichiometries. This Bos taurus (Bovine) protein is tRNA (adenine(58)-N(1))-methyltransferase non-catalytic subunit TRM6 (TRMT6).